Here is a 163-residue protein sequence, read N- to C-terminus: Crossover junction endodeoxyribonuclease RuvC (163 aa).

Active-site residues include Asp-9, Glu-76, and Asp-148. 3 residues coordinate Mg(2+): Asp-9, Glu-76, and Asp-148.

It belongs to the RuvC family. In terms of assembly, homodimer which binds Holliday junction (HJ) DNA. The HJ becomes 2-fold symmetrical on binding to RuvC with unstacked arms; it has a different conformation from HJ DNA in complex with RuvA. In the full resolvosome a probable DNA-RuvA(4)-RuvB(12)-RuvC(2) complex forms which resolves the HJ. Mg(2+) is required as a cofactor.

It is found in the cytoplasm. It catalyses the reaction Endonucleolytic cleavage at a junction such as a reciprocal single-stranded crossover between two homologous DNA duplexes (Holliday junction).. In terms of biological role, the RuvA-RuvB-RuvC complex processes Holliday junction (HJ) DNA during genetic recombination and DNA repair. Endonuclease that resolves HJ intermediates. Cleaves cruciform DNA by making single-stranded nicks across the HJ at symmetrical positions within the homologous arms, yielding a 5'-phosphate and a 3'-hydroxyl group; requires a central core of homology in the junction. The consensus cleavage sequence is 5'-(A/T)TT(C/G)-3'. Cleavage occurs on the 3'-side of the TT dinucleotide at the point of strand exchange. HJ branch migration catalyzed by RuvA-RuvB allows RuvC to scan DNA until it finds its consensus sequence, where it cleaves and resolves the cruciform DNA. This Trichormus variabilis (strain ATCC 29413 / PCC 7937) (Anabaena variabilis) protein is Crossover junction endodeoxyribonuclease RuvC.